Here is a 439-residue protein sequence, read N- to C-terminus: Enolase (439 aa).

Residue Gln-163 participates in (2R)-2-phosphoglycerate binding. Catalysis depends on Glu-205, which acts as the Proton donor. Mg(2+) contacts are provided by Asp-242, Glu-287, and Asp-314. (2R)-2-phosphoglycerate-binding residues include Lys-339, Arg-368, Ser-369, and Lys-390. Lys-339 serves as the catalytic Proton acceptor.

Belongs to the enolase family. Mg(2+) is required as a cofactor.

The protein resides in the cytoplasm. Its subcellular location is the secreted. It is found in the cell surface. It catalyses the reaction (2R)-2-phosphoglycerate = phosphoenolpyruvate + H2O. The protein operates within carbohydrate degradation; glycolysis; pyruvate from D-glyceraldehyde 3-phosphate: step 4/5. Catalyzes the reversible conversion of 2-phosphoglycerate (2-PG) into phosphoenolpyruvate (PEP). It is essential for the degradation of carbohydrates via glycolysis. This chain is Enolase, found in Levilactobacillus brevis (strain ATCC 367 / BCRC 12310 / CIP 105137 / JCM 1170 / LMG 11437 / NCIMB 947 / NCTC 947) (Lactobacillus brevis).